The chain runs to 219 residues: Endo-type membrane-bound lytic murein transglycosylase A-like protein (219 aa).

It belongs to the transglycosylase Slt family.

The catalysed reaction is Endolytic cleavage of the (1-&gt;4)-beta-glycosidic linkage between N-acetylmuramic acid (MurNAc) and N-acetylglucosamine (GlcNAc) residues in peptidoglycan with concomitant formation of a 1,6-anhydrobond in the MurNAc residue.. Murein-degrading enzyme. May play a role in recycling of muropeptides during cell elongation and/or cell division (Potential). The sequence is that of Endo-type membrane-bound lytic murein transglycosylase A-like protein from Shigella flexneri.